The sequence spans 81 residues: Photosystem I iron-sulfur center (81 aa).

4Fe-4S ferredoxin-type domains lie at 2 to 31 (SHTV…MAPW) and 39 to 68 (VASA…VRVY). C11, C14, C17, C21, C48, C51, C54, and C58 together coordinate [4Fe-4S] cluster.

In terms of assembly, the eukaryotic PSI reaction center is composed of at least 11 subunits. [4Fe-4S] cluster serves as cofactor.

It is found in the plastid. It localises to the chloroplast thylakoid membrane. The catalysed reaction is reduced [plastocyanin] + hnu + oxidized [2Fe-2S]-[ferredoxin] = oxidized [plastocyanin] + reduced [2Fe-2S]-[ferredoxin]. Its function is as follows. Apoprotein for the two 4Fe-4S centers FA and FB of photosystem I (PSI); essential for photochemical activity. FB is the terminal electron acceptor of PSI, donating electrons to ferredoxin. The C-terminus interacts with PsaA/B/D and helps assemble the protein into the PSI complex. Required for binding of PsaD and PsaE to PSI. PSI is a plastocyanin/cytochrome c6-ferredoxin oxidoreductase, converting photonic excitation into a charge separation, which transfers an electron from the donor P700 chlorophyll pair to the spectroscopically characterized acceptors A0, A1, FX, FA and FB in turn. The chain is Photosystem I iron-sulfur center from Tupiella akineta (Green alga).